Reading from the N-terminus, the 130-residue chain is Small ribosomal subunit protein uS9 (130 aa).

The protein belongs to the universal ribosomal protein uS9 family.

This is Small ribosomal subunit protein uS9 from Shigella sonnei (strain Ss046).